Here is an 898-residue protein sequence, read N- to C-terminus: Netrin receptor UNC5A (898 aa).

Residues 1–25 (MAVRPGLWPVLLGIVLAAWLRGSGA) form the signal peptide. At 26–361 (QQSATVANPV…TASCPEDVAL (336 aa)) the chain is on the extracellular side. One can recognise an Ig-like domain in the interval 44–141 (PHFLVEPEDV…SGTTKSQKAY (98 aa)). Cystine bridges form between Cys-65/Cys-126, Cys-77/Cys-124, and Cys-170/Cys-221. Asn-107 and Asn-218 each carry an N-linked (GlcNAc...) asparagine glycan. Positions 155-238 (PLAKEVSLEQ…RRRSTSAAVI (84 aa)) constitute an Ig-like C2-type domain. TSP type-1 domains lie at 242–296 (NGGW…TLCP) and 298–350 (DGSW…DLCL). Residues Trp-245, Trp-248, and Trp-251 are each glycosylated (C-linked (Man) tryptophan). Cystine bridges form between Cys-254–Cys-291, Cys-258–Cys-295, and Cys-269–Cys-281. C-linked (Man) tryptophan glycosylation is found at Trp-301 and Trp-304. 3 cysteine pairs are disulfide-bonded: Cys-310-Cys-344, Cys-314-Cys-349, and Cys-322-Cys-334. Asn-343 carries an N-linked (GlcNAc...) asparagine glycan. A helical membrane pass occupies residues 362–382 (YIGLVAVAVCLFLLLLALGLI). The Cytoplasmic portion of the chain corresponds to 383–898 (YCRKKEGLDS…GLFTVSEAEC (516 aa)). Residues 497–640 (NMAYGTFNFL…LGRFALVGEA (144 aa)) form the ZU5 domain. The interval 661–679 (SLEYNIRVYCLHDTHDALK) is interaction with DCC. The 81-residue stretch at 817–897 (QKIIASLDPP…AGLFTVSEAE (81 aa)) folds into the Death domain.

Belongs to the unc-5 family. As to quaternary structure, homodimer and homooligomer. Interacts with the cytoplasmic part of DCC. Interacts with MAGED1. Interacts with PRKCABP, possibly mediating some interaction with PKC. Interacts (via extracellular domain) with FLRT2 (via extracellular domain). Interacts (via extracellular domain) with FLRT3 (via extracellular domain). In terms of processing, phosphorylated on cytoplasmic tyrosine residues. Phosphorylated by PKC in vitro. Proteolytically cleaved by caspases during apoptosis. The cleavage does not take place when the receptor is associated with netrin ligand. Its cleavage by caspases is required to induce apoptosis. Post-translationally, the two extracellular TSRs of UNC5A contain WxxWxxWxxC motifs that can be C-mannosylated on all tryptophans. DPY19L1 preferentially mannosylates the first two tryptophans and DPY19L3 prefers the third. C-mannosylation by DPY19L1 is required for transport of UNC5A from the endoplasmic reticulum to the cell surface. As to expression, mainly expressed in regions of differentiating neurons. Expressed at early stages of neural tube development in the ventral spinal cord. In developing hindbrain, it colocalizes with a number of cranial motor neuron subpopulations from embryonic E11 to E14, while DCC is expressed by motor neurons at E12. Also expressed in non-neural structures, such as the basal plane of the hindbrain and midbrain, in the developing hypothalamus, thalamus and in the pallidum.

The protein localises to the cell membrane. It localises to the membrane raft. Its subcellular location is the cell projection. It is found in the neuron projection. Its function is as follows. Receptor for netrin required for axon guidance. Functions in the netrin signaling pathway and promotes neurite outgrowth in response to NTN1. Mediates axon repulsion of neuronal growth cones in the developing nervous system in response to netrin. Axon repulsion in growth cones may be mediated by its association with DCC that may trigger signaling for repulsion. It also acts as a dependence receptor required for apoptosis induction when not associated with netrin ligand. This Rattus norvegicus (Rat) protein is Netrin receptor UNC5A (Unc5a).